The chain runs to 959 residues: DNA-directed RNA polymerase subunit beta'' (959 aa).

Cys211, Cys288, Cys295, and Cys298 together coordinate Zn(2+).

Belongs to the RNA polymerase beta' chain family. RpoC2 subfamily. As to quaternary structure, in plastids the minimal PEP RNA polymerase catalytic core is composed of four subunits: alpha, beta, beta', and beta''. When a (nuclear-encoded) sigma factor is associated with the core the holoenzyme is formed, which can initiate transcription. It depends on Zn(2+) as a cofactor.

The protein localises to the plastid. It localises to the apicoplast. The catalysed reaction is RNA(n) + a ribonucleoside 5'-triphosphate = RNA(n+1) + diphosphate. Its function is as follows. DNA-dependent RNA polymerase catalyzes the transcription of DNA into RNA using the four ribonucleoside triphosphates as substrates. The chain is DNA-directed RNA polymerase subunit beta'' from Plasmodium falciparum (isolate 3D7).